The chain runs to 299 residues: 33 kDa chaperonin (299 aa).

Cystine bridges form between C240–C242 and C273–C276.

Belongs to the HSP33 family. Post-translationally, under oxidizing conditions two disulfide bonds are formed involving the reactive cysteines. Under reducing conditions zinc is bound to the reactive cysteines and the protein is inactive.

It localises to the cytoplasm. Functionally, redox regulated molecular chaperone. Protects both thermally unfolding and oxidatively damaged proteins from irreversible aggregation. Plays an important role in the bacterial defense system toward oxidative stress. This chain is 33 kDa chaperonin, found in Thermosynechococcus vestitus (strain NIES-2133 / IAM M-273 / BP-1).